A 172-amino-acid chain; its full sequence is Adenine phosphoribosyltransferase (172 aa).

It belongs to the purine/pyrimidine phosphoribosyltransferase family. In terms of assembly, homodimer.

Its subcellular location is the cytoplasm. It carries out the reaction AMP + diphosphate = 5-phospho-alpha-D-ribose 1-diphosphate + adenine. The protein operates within purine metabolism; AMP biosynthesis via salvage pathway; AMP from adenine: step 1/1. Catalyzes a salvage reaction resulting in the formation of AMP, that is energically less costly than de novo synthesis. This is Adenine phosphoribosyltransferase from Desulforamulus reducens (strain ATCC BAA-1160 / DSM 100696 / MI-1) (Desulfotomaculum reducens).